The chain runs to 159 residues: 2-C-methyl-D-erythritol 2,4-cyclodiphosphate synthase (159 aa).

A divalent metal cation contacts are provided by Asp10 and His12. 4-CDP-2-C-methyl-D-erythritol 2-phosphate-binding positions include Asp10–His12 and His36–Ser37. Residue His44 participates in a divalent metal cation binding. Residues Asp58–Gly60, Phe63–Asp67, Ala102–Ala108, Thr134–Glu137, Phe141, and Arg144 contribute to the 4-CDP-2-C-methyl-D-erythritol 2-phosphate site.

This sequence belongs to the IspF family. Homotrimer. It depends on a divalent metal cation as a cofactor.

It carries out the reaction 4-CDP-2-C-methyl-D-erythritol 2-phosphate = 2-C-methyl-D-erythritol 2,4-cyclic diphosphate + CMP. It participates in isoprenoid biosynthesis; isopentenyl diphosphate biosynthesis via DXP pathway; isopentenyl diphosphate from 1-deoxy-D-xylulose 5-phosphate: step 4/6. Functionally, involved in the biosynthesis of isopentenyl diphosphate (IPP) and dimethylallyl diphosphate (DMAPP), two major building blocks of isoprenoid compounds. Catalyzes the conversion of 4-diphosphocytidyl-2-C-methyl-D-erythritol 2-phosphate (CDP-ME2P) to 2-C-methyl-D-erythritol 2,4-cyclodiphosphate (ME-CPP) with a corresponding release of cytidine 5-monophosphate (CMP). In Cellvibrio japonicus (strain Ueda107) (Pseudomonas fluorescens subsp. cellulosa), this protein is 2-C-methyl-D-erythritol 2,4-cyclodiphosphate synthase.